Reading from the N-terminus, the 194-residue chain is Ion-translocating oxidoreductase complex subunit B (194 aa).

Positions 1 to 26 (MSSILIAVIAISALALVFGLILGFAS) are hydrophobic. A 4Fe-4S domain is found at 32–90 (ESDPIVDQIDSILPQTQCGQCGYPGCKPYAEAIANGDTINKCPPGGQATIEKLADLMGV). [4Fe-4S] cluster contacts are provided by cysteine 49, cysteine 52, cysteine 57, cysteine 73, cysteine 114, cysteine 117, cysteine 120, cysteine 124, cysteine 144, cysteine 147, cysteine 150, and cysteine 154. 4Fe-4S ferredoxin-type domains follow at residues 105–134 (KIAF…GGTK) and 135–164 (ALHT…MIPV).

This sequence belongs to the 4Fe4S bacterial-type ferredoxin family. RnfB subfamily. In terms of assembly, the complex is composed of six subunits: RnfA, RnfB, RnfC, RnfD, RnfE and RnfG. It depends on [4Fe-4S] cluster as a cofactor.

The protein localises to the cell inner membrane. Its function is as follows. Part of a membrane-bound complex that couples electron transfer with translocation of ions across the membrane. The polypeptide is Ion-translocating oxidoreductase complex subunit B (Aliivibrio salmonicida (strain LFI1238) (Vibrio salmonicida (strain LFI1238))).